Reading from the N-terminus, the 770-residue chain is Probable zinc transporter protein DDB_G0291141 (770 aa).

Topologically, residues 1-36 (MAGSLDDSIYNNGRSGGGGGGFKFSKGFNKDSISKR) are cytoplasmic. Residues 37–57 (IIMMLFFSKGIRAWSCIILLY) form a helical membrane-spanning segment. The Extracellular segment spans residues 58–62 (FLQSS). The helical transmembrane segment at 63 to 83 (ISIISASFYMCLFSAIFSVVV) threads the bilayer. At 84–100 (EKPWNLLSSLRPSQIKK) the chain is on the cytoplasmic side. The helical transmembrane segment at 101-117 (IIYHSIFNLLIIITWNS) threads the bilayer. Over 118-123 (SIKFIG) the chain is Extracellular. The helical transmembrane segment at 124–146 (PIGSILASDYTFSTYPLIFNSLL) threads the bilayer. At 147 to 154 (QGNFLATD) the chain is on the cytoplasmic side. The helical transmembrane segment at 155-175 (MSRGSIMLMIGYFLIPLFGIS) threads the bilayer. Residues 176 to 184 (NRLDILGYT) are Extracellular-facing. A helical membrane pass occupies residues 185-205 (SSQVFMIGLFSLIVHNVLVLW). At 206-224 (KKTIVRSWNSGSSGGKNKL) the chain is on the cytoplasmic side. The helical transmembrane segment at 225 to 245 (SSLGSCVSTIILFVFKLFEGF) threads the bilayer. The Extracellular segment spans residues 246–262 (SSGSSGSDSINQVSYSQ). A helical transmembrane segment spans residues 263-283 (LFVIAIITFILYSLNQFIDDV). Residues 284-291 (SEKELTFN) lie on the Cytoplasmic side of the membrane. Residues 292-312 (VLSKVSLTSSVIFGLLAALFI) form a helical membrane-spanning segment. The Extracellular segment spans residues 313–316 (GFKD). A helical transmembrane segment spans residues 317 to 337 (FFHPILILSFIFIINAIHILY). Topologically, residues 338 to 404 (SKSNDIQPMT…QIVDKPTSRR (67 aa)) are cytoplasmic. A helical membrane pass occupies residues 405–425 (IFTFLVINLMFMFVEMAYGIW). Topologically, residues 426-434 (TNSLGLITD) are extracellular. Residues 435 to 455 (ACHMFFDATALFIALVAEVIS) form a helical membrane-spanning segment. The Cytoplasmic segment spans residues 456 to 469 (QWKQNDKYSYGYGR). A helical membrane pass occupies residues 470–490 (FQVLSGFVNGIFLIFIAVTIL). Topologically, residues 491–507 (MESVERLLEPPEINTDK) are extracellular. Residues 508 to 528 (LLLVSVLGFIINLIGIFSFHG) traverse the membrane as a helical segment. Residues 529–592 (DHGHSHGGGG…GVFLHLLADT (64 aa)) are Cytoplasmic-facing. Residues 532-566 (HSHGGGGGHSHGGGEKKEKHHGHSHGGHGDHQQVT) are disordered. The helical transmembrane segment at 593–613 (LGSVGVIVSSLIIQIWGYTLA) threads the bilayer. Position 614 (aspartate 614) is a topological domain, extracellular. The helical transmembrane segment at 615-635 (PICSLLISILIFLSVLPLIAN) threads the bilayer. Over 636-770 (TAKTLLQCTP…SSSSHHHRHN (135 aa)) the chain is Cytoplasmic. Residues 751–770 (DIHHNHSSSSSSSSHHHRHN) form a disordered region.

This sequence belongs to the cation diffusion facilitator (CDF) transporter (TC 2.A.4) family. SLC30A subfamily.

It is found in the membrane. May be involved in zinc transport from the cytoplasm to either intracellular organelles or extracellular spaces. This is Probable zinc transporter protein DDB_G0291141 from Dictyostelium discoideum (Social amoeba).